A 520-amino-acid chain; its full sequence is 2-isopropylmalate synthase (520 aa).

The Pyruvate carboxyltransferase domain occupies 12-274 (VLIFDTTLRD…TTGIDTTQIM (263 aa)). Mn(2+) contacts are provided by Asp-21, His-209, His-211, and Asn-245. Positions 398–520 (RLLSLTVIAG…RLHAQHAAAE (123 aa)) are regulatory domain.

Belongs to the alpha-IPM synthase/homocitrate synthase family. LeuA type 1 subfamily. In terms of assembly, homodimer. The cofactor is Mn(2+).

The protein localises to the cytoplasm. It carries out the reaction 3-methyl-2-oxobutanoate + acetyl-CoA + H2O = (2S)-2-isopropylmalate + CoA + H(+). Its pathway is amino-acid biosynthesis; L-leucine biosynthesis; L-leucine from 3-methyl-2-oxobutanoate: step 1/4. In terms of biological role, catalyzes the condensation of the acetyl group of acetyl-CoA with 3-methyl-2-oxobutanoate (2-ketoisovalerate) to form 3-carboxy-3-hydroxy-4-methylpentanoate (2-isopropylmalate). The sequence is that of 2-isopropylmalate synthase from Methylobacterium nodulans (strain LMG 21967 / CNCM I-2342 / ORS 2060).